Consider the following 179-residue polypeptide: Large ribosomal subunit protein uL6 (179 aa).

The protein belongs to the universal ribosomal protein uL6 family. As to quaternary structure, part of the 50S ribosomal subunit.

In terms of biological role, this protein binds to the 23S rRNA, and is important in its secondary structure. It is located near the subunit interface in the base of the L7/L12 stalk, and near the tRNA binding site of the peptidyltransferase center. This chain is Large ribosomal subunit protein uL6, found in Gloeothece citriformis (strain PCC 7424) (Cyanothece sp. (strain PCC 7424)).